The primary structure comprises 1353 residues: Adenylate cyclase type 9 (1353 aa).

Disordered stretches follow at residues 1 to 27 (MASPPHQQLLHHHSTEVSCDSSGDSNS) and 49 to 71 (SISSSCSSSGDSGGVPRRVGGGG). Over 1–117 (MASPPHQQLL…CFPQTQRRFR (117 aa)) the chain is Cytoplasmic. Positions 16–27 (EVSCDSSGDSNS) are enriched in polar residues. Residues 49 to 66 (SISSSCSSSGDSGGVPRR) are compositionally biased toward low complexity. Residues 118-138 (YALFYIGFACLLWSIYFAVHM) traverse the membrane as a helical segment. Residues 139-141 (RSR) are Extracellular-facing. The chain crosses the membrane as a helical span at residues 142–162 (LIVMVAPALCFLLVCVGFFLF). Residues 163 to 171 (TFTKLYARH) lie on the Cytoplasmic side of the membrane. The helical transmembrane segment at 172 to 192 (YAWTSLALTLLVFALTLAAQF) threads the bilayer. Over 193 to 215 (QVLTPVSGRGDSSNLTATARPTD) the chain is Extracellular. A glycan (N-linked (GlcNAc...) asparagine) is linked at Asn-206. Residues 216–235 (TCLSQVGSFSMCIEVLFLLY) traverse the membrane as a helical segment. Residues 236–241 (TVMHLP) lie on the Cytoplasmic side of the membrane. A helical membrane pass occupies residues 242-259 (LYLSLCLGVAYSVLFETF). Residues 260-280 (GYHFRDEACFPSPGAGALHWE) lie on the Extracellular side of the membrane. The chain crosses the membrane as a helical span at residues 281–301 (LLSRGLLHGCIHAIGVHLFVM). The Cytoplasmic segment spans residues 302 to 786 (SQVRSRSTFL…VKTFASPTFS (485 aa)). The tract at residues 349–375 (QGDEESENSVKRHATSSPKNRKKKSSI) is disordered. The segment covering 359 to 374 (KRHATSSPKNRKKKSS) has biased composition (basic residues). The Guanylate cyclase 1 domain occupies 394–521 (SILFADIVGF…NDVNLANLME (128 aa)). Residues Asp-399, Ile-400, and Asp-443 each contribute to the Mg(2+) site. Residues 399 to 404 (DIVGFT), 441 to 443 (LGD), and Arg-487 each bind ATP. Ser-610 carries the phosphoserine modification. The segment at 642–684 (EAGAEGGAPQNGCQDEHKNSTKASGGPNPKTQNGLLSPPQEEK) is disordered. Residues Ser-688, Ser-691, and Ser-706 each carry the phosphoserine modification. A helical membrane pass occupies residues 787–807 (SLLDVFLSTTVFLTLSTTCFL). Topologically, residues 808–818 (KYEAATVPPPP) are extracellular. Residues 819-839 (AALAVFSAALLLEVLSLAVSI) traverse the membrane as a helical segment. Residues 840 to 867 (RMVFFLEDVMACTKRLLEWIAGWLPRHC) are Cytoplasmic-facing. The chain crosses the membrane as a helical span at residues 868 to 888 (IGAILVSLPALAVYSHVTSEY). The Extracellular portion of the chain corresponds to 889–891 (ETN). Residues 892-912 (IHFPVFTGSAALIAVVHYCNF) form a helical membrane-spanning segment. The Cytoplasmic portion of the chain corresponds to 913 to 920 (CQLSSWMR). Residues 921–941 (SSLATVVGAGPLLLLYVSLCP) traverse the membrane as a helical segment. Topologically, residues 942–975 (DSSVLTSPLDAVQNFSSERNPCNSSVPRDLRRPA) are extracellular. N-linked (GlcNAc...) asparagine glycans are attached at residues Asn-955 and Asn-964. A helical membrane pass occupies residues 976–996 (SLIGQEVVLVFFLLLLLVWFL). The Cytoplasmic segment spans residues 997 to 1353 (NREFEVSYRL…LTKLNVSKSV (357 aa)). A Guanylate cyclase 2 domain is found at 1058–1198 (GVIFASIVNF…DTVNIASRMD (141 aa)). Residues Lys-1108, 1185 to 1187 (DIW), 1192 to 1196 (NIASR), and Lys-1232 contribute to the ATP site. Phosphoserine occurs at positions 1257, 1259, 1295, and 1307. The span at 1292-1301 (SLGSDSSTQA) shows a compositional bias: polar residues. The tract at residues 1292–1326 (SLGSDSSTQAKDAHLSPKRPWKEPVKAEERGRFGK) is disordered. Over residues 1302–1326 (KDAHLSPKRPWKEPVKAEERGRFGK) the composition is skewed to basic and acidic residues.

It belongs to the adenylyl cyclase class-4/guanylyl cyclase family. Requires Mg(2+) as cofactor. Mn(2+) is required as a cofactor. Detected in skeletal muscle, pancreas, lung, heart, kidney, liver, brain and placenta. Expressed in multiple cells of the lung, with expression highest in airway smooth muscle.

It is found in the cell membrane. It carries out the reaction ATP = 3',5'-cyclic AMP + diphosphate. With respect to regulation, insensitive to calcium/calmodulin, forskolin and somatostatin. Stimulated by beta-adrenergic receptor activation. Activity is down-regulated by calcium/calcineurin. Adenylyl cyclase that catalyzes the formation of the signaling molecule cAMP in response to activation of G protein-coupled receptors. Contributes to signaling cascades activated by CRH (corticotropin-releasing factor), corticosteroids and beta-adrenergic receptors. The polypeptide is Adenylate cyclase type 9 (ADCY9) (Homo sapiens (Human)).